A 158-amino-acid chain; its full sequence is Crossover junction endodeoxyribonuclease RuvC (158 aa).

Residues Asp7, Glu67, and Asp140 contribute to the active site. Asp7, Glu67, and Asp140 together coordinate Mg(2+).

Belongs to the RuvC family. In terms of assembly, homodimer which binds Holliday junction (HJ) DNA. The HJ becomes 2-fold symmetrical on binding to RuvC with unstacked arms; it has a different conformation from HJ DNA in complex with RuvA. In the full resolvosome a probable DNA-RuvA(4)-RuvB(12)-RuvC(2) complex forms which resolves the HJ. Requires Mg(2+) as cofactor.

The protein resides in the cytoplasm. The enzyme catalyses Endonucleolytic cleavage at a junction such as a reciprocal single-stranded crossover between two homologous DNA duplexes (Holliday junction).. The RuvA-RuvB-RuvC complex processes Holliday junction (HJ) DNA during genetic recombination and DNA repair. Endonuclease that resolves HJ intermediates. Cleaves cruciform DNA by making single-stranded nicks across the HJ at symmetrical positions within the homologous arms, yielding a 5'-phosphate and a 3'-hydroxyl group; requires a central core of homology in the junction. The consensus cleavage sequence is 5'-(A/T)TT(C/G)-3'. Cleavage occurs on the 3'-side of the TT dinucleotide at the point of strand exchange. HJ branch migration catalyzed by RuvA-RuvB allows RuvC to scan DNA until it finds its consensus sequence, where it cleaves and resolves the cruciform DNA. This is Crossover junction endodeoxyribonuclease RuvC from Dictyoglomus thermophilum (strain ATCC 35947 / DSM 3960 / H-6-12).